A 310-amino-acid polypeptide reads, in one-letter code: Putative S-adenosyl-L-methionine-dependent methyltransferase MAP_2076c (310 aa).

Residues aspartate 131 and 160-161 (DL) contribute to the S-adenosyl-L-methionine site.

It belongs to the UPF0677 family.

Functionally, exhibits S-adenosyl-L-methionine-dependent methyltransferase activity. The chain is Putative S-adenosyl-L-methionine-dependent methyltransferase MAP_2076c from Mycolicibacterium paratuberculosis (strain ATCC BAA-968 / K-10) (Mycobacterium paratuberculosis).